A 201-amino-acid polypeptide reads, in one-letter code: Hydroxymethylphosphonate dioxygenase (201 aa).

Fe cation is bound by residues His-47, His-71, Asp-72, His-94, His-117, and Asp-174.

Requires Fe(2+) as cofactor.

The catalysed reaction is hydroxymethylphosphonate + O2 = formate + phosphate + 2 H(+). It catalyses the reaction (1R)-(2-amino-1-hydroxyethyl)phosphonate + O2 = glycine + phosphate + 2 H(+). The enzyme catalyses (1R)-(1-hydroxyethyl)phosphonate + O2 = acetate + phosphate + 2 H(+). In terms of biological role, part of an oxidative pathway for utilization of methylphosphonic acid as a phosphate source. Catalyzes the oxidation of hydroxymethylphosphonic acid to produce formate and phosphate. Can also use (1R)-(2-amino-1-hydroxyethyl)phosphonic acid and (R)-1-hydroxyethylphosphonic acid with similar catalytic efficiency. This chain is Hydroxymethylphosphonate dioxygenase, found in Gimesia maris (strain ATCC 29201 / DSM 8797 / 534-30) (Planctomyces maris).